Reading from the N-terminus, the 395-residue chain is ATP phosphoribosyltransferase regulatory subunit (395 aa).

This sequence belongs to the class-II aminoacyl-tRNA synthetase family. HisZ subfamily. In terms of assembly, heteromultimer composed of HisG and HisZ subunits.

The protein resides in the cytoplasm. Its pathway is amino-acid biosynthesis; L-histidine biosynthesis; L-histidine from 5-phospho-alpha-D-ribose 1-diphosphate: step 1/9. Required for the first step of histidine biosynthesis. May allow the feedback regulation of ATP phosphoribosyltransferase activity by histidine. In Pseudomonas syringae pv. syringae (strain B728a), this protein is ATP phosphoribosyltransferase regulatory subunit.